Reading from the N-terminus, the 181-residue chain is Probable pyruvoyl-dependent arginine decarboxylase (181 aa).

Residue serine 43 is modified to Pyruvic acid (Ser).

Belongs to the PdaD family. Pyruvate is required as a cofactor.

The enzyme catalyses L-arginine + H(+) = agmatine + CO2. This Chlorobaculum tepidum (strain ATCC 49652 / DSM 12025 / NBRC 103806 / TLS) (Chlorobium tepidum) protein is Probable pyruvoyl-dependent arginine decarboxylase.